Here is a 395-residue protein sequence, read N- to C-terminus: Flagellin D (395 aa).

This sequence belongs to the bacterial flagellin family.

Its subcellular location is the secreted. It localises to the bacterial flagellum. Its function is as follows. Flagellin is the subunit protein which polymerizes to form the filaments of bacterial flagella. This chain is Flagellin D (flaD), found in Rhizobium meliloti (Ensifer meliloti).